A 582-amino-acid chain; its full sequence is ABC transporter-like protein ECU11_1340 (582 aa).

The ABC transporter domain maps to 15–257; it reads VPNQNLSSNE…LGTKGIHNDG (243 aa). 47–54 is a binding site for ATP; sequence GTSGSGKT. The 204-residue stretch at 316–519 folds into the ABC transmembrane type-2 domain; it reads YVSFQMAIRQ…EIDAFISNFF (204 aa). The next 6 membrane-spanning stretches (helical) occupy residues 335 to 355, 359 to 378, 412 to 432, 436 to 456, 482 to 502, and 551 to 571; these read ILYS…GKYI, FSIA…YVMN, TLVS…FGLI, HAFL…SMLF, GALL…SVIP, and SFLR…SSIL.

The protein belongs to the ABC transporter superfamily.

The protein localises to the membrane. The protein is ABC transporter-like protein ECU11_1340 of Encephalitozoon cuniculi (strain GB-M1) (Microsporidian parasite).